We begin with the raw amino-acid sequence, 200 residues long: Holliday junction branch migration complex subunit RuvA (200 aa).

The segment at 1-65 (MYEYIKGTLT…ETEHVLYGFS (65 aa)) is domain I. The segment at 66–144 (SRAERECFRL…TLMPLYLEEP (79 aa)) is domain II. The interval 145-149 (VVPSS) is flexible linker. The interval 150–200 (TANSSFKEGIGALMNLGFSRLAADRMMTEAVKELSEEASVAELLPIALRKS) is domain III.

This sequence belongs to the RuvA family. In terms of assembly, homotetramer. Forms an RuvA(8)-RuvB(12)-Holliday junction (HJ) complex. HJ DNA is sandwiched between 2 RuvA tetramers; dsDNA enters through RuvA and exits via RuvB. An RuvB hexamer assembles on each DNA strand where it exits the tetramer. Each RuvB hexamer is contacted by two RuvA subunits (via domain III) on 2 adjacent RuvB subunits; this complex drives branch migration. In the full resolvosome a probable DNA-RuvA(4)-RuvB(12)-RuvC(2) complex forms which resolves the HJ.

The protein localises to the cytoplasm. Functionally, the RuvA-RuvB-RuvC complex processes Holliday junction (HJ) DNA during genetic recombination and DNA repair, while the RuvA-RuvB complex plays an important role in the rescue of blocked DNA replication forks via replication fork reversal (RFR). RuvA specifically binds to HJ cruciform DNA, conferring on it an open structure. The RuvB hexamer acts as an ATP-dependent pump, pulling dsDNA into and through the RuvAB complex. HJ branch migration allows RuvC to scan DNA until it finds its consensus sequence, where it cleaves and resolves the cruciform DNA. The polypeptide is Holliday junction branch migration complex subunit RuvA (Chlamydia trachomatis serovar D (strain ATCC VR-885 / DSM 19411 / UW-3/Cx)).